Consider the following 331-residue polypeptide: Biotin synthase (331 aa).

Residues 52-277 (PDVEVEGIIS…RTMLRFAGGR (226 aa)) form the Radical SAM core domain. Positions 67, 71, and 74 each coordinate [4Fe-4S] cluster. The [2Fe-2S] cluster site is built by cysteine 110, cysteine 143, cysteine 202, and arginine 272.

Belongs to the radical SAM superfamily. Biotin synthase family. As to quaternary structure, homodimer. Requires [4Fe-4S] cluster as cofactor. [2Fe-2S] cluster is required as a cofactor.

It catalyses the reaction (4R,5S)-dethiobiotin + (sulfur carrier)-SH + 2 reduced [2Fe-2S]-[ferredoxin] + 2 S-adenosyl-L-methionine = (sulfur carrier)-H + biotin + 2 5'-deoxyadenosine + 2 L-methionine + 2 oxidized [2Fe-2S]-[ferredoxin]. Its pathway is cofactor biosynthesis; biotin biosynthesis; biotin from 7,8-diaminononanoate: step 2/2. Functionally, catalyzes the conversion of dethiobiotin (DTB) to biotin by the insertion of a sulfur atom into dethiobiotin via a radical-based mechanism. The sequence is that of Biotin synthase from Mycobacterium sp. (strain JLS).